The sequence spans 335 residues: Leukocyte cell-derived chemotaxin 1 (335 aa).

A helical membrane pass occupies residues 45–65 (VVLISGAVLLLLGAIGAFYFW). A BRICHOS domain is found at 104-201 (GSGAEEAVEV…LCGDLPIFWL (98 aa)). Cys131 and Cys193 are disulfide-bonded. Residues 211-214 (RERR) constitute a propeptide that is removed on maturation. The tract at residues 221-269 (VTTTTTRRLRSGPQGTPAPGRPNNGTRPSVQEDAEPFNPDNPYHQQEGE) is disordered. Thr223 carries N-linked (GlcNAc...) asparagine; in variant 223-N-E-224 glycosylation. A glycan (O-linked (GalNAc...) threonine; partial) is linked at Thr236. N-linked (GlcNAc...) asparagine glycosylation is present at Asn244. 4 cysteine pairs are disulfide-bonded: Cys283/Cys287, Cys284/Cys324, Cys294/Cys318, and Cys298/Cys314.

Belongs to the chondromodulin-1 family. Post-translationally, after cleavage, the post-translationally modified ChM-I is secreted as a glycoprotein. In terms of processing, two other smaller nonglycosylated chondromodulin forms (9 kDa and 7 kDa) are found either in developing articular cartilage or in chondrocytes. The 9 kDa form could be processed by an extracellular matrix-associated protease as a metalloproteinase and the 7 kDa form could be processed intracellularly. As to expression, nasal and articular cartilage, and fetal epiphysis.

Its subcellular location is the secreted. It localises to the extracellular space. The protein resides in the extracellular matrix. The protein localises to the endomembrane system. Bifunctional growth regulator that stimulates the growth of cultured chondrocytes in the presence of basic fibroblast growth factor (FGF) but inhibits the growth of cultured vascular endothelial cells. May contribute to the rapid growth of cartilage and vascular invasion prior to the replacement of cartilage by bone during endochondral bone development. Inhibits in vitro tube formation and mobilization of endothelial cells. Plays a role as antiangiogenic factor in cardiac valves to suppress neovascularization. The chain is Leukocyte cell-derived chemotaxin 1 from Bos taurus (Bovine).